A 291-amino-acid polypeptide reads, in one-letter code: Elongation factor Ts (291 aa).

Residues 79–82 (TDFV) are involved in Mg(2+) ion dislocation from EF-Tu.

The protein belongs to the EF-Ts family.

Its subcellular location is the cytoplasm. In terms of biological role, associates with the EF-Tu.GDP complex and induces the exchange of GDP to GTP. It remains bound to the aminoacyl-tRNA.EF-Tu.GTP complex up to the GTP hydrolysis stage on the ribosome. In Stenotrophomonas maltophilia (strain K279a), this protein is Elongation factor Ts.